Reading from the N-terminus, the 948-residue chain is Zinc finger CCCH domain-containing protein 3 (948 aa).

Disordered regions lie at residues 25 to 108 (HGNA…VPQQ), 121 to 219 (QNVV…RRTV), 265 to 296 (VDAG…REAS), and 336 to 493 (NVCK…LKKT). Over residues 56 to 74 (RPSRRGYSSHHGPSWRKKY) the composition is skewed to basic residues. The span at 128-141 (KPPSKSGSASASGA) shows a compositional bias: low complexity. A compositionally biased stretch (basic and acidic residues) spans 157 to 166 (QRPREGEGEP). A compositionally biased stretch (low complexity) spans 372-398 (SAPSKYKWKASSPSASSSSSFRWQSEA). A compositionally biased stretch (polar residues) spans 405-415 (SQLSPVLSRSP). Ser408 carries the phosphoserine modification. The span at 441–452 (VKSRTKIIRRRS) shows a compositional bias: basic residues. 5 C3H1-type zinc fingers span residues 667–695 (EKRK…HDPE), 699–722 (VCTR…HHVS), 723–749 (KEKM…HVYV), 750–777 (SRKA…HTLL), and 778–800 (CPDF…HRTQ). Disordered regions lie at residues 798-891 (RTQK…HEAP) and 913-948 (ISLQ…KPRL). Residues 834–846 (SASQRPTRQTPSS) show a composition bias toward polar residues. Low complexity-rich tracts occupy residues 847–856 (AALTAAAVAA) and 864–885 (SASP…PPAS). A phosphoserine mark is found at Ser918 and Ser920.

Interacts with SMAD1, SMAD3, SMAD4, CPSF2 and CPSF3.

It localises to the nucleus. Required for the export of polyadenylated mRNAs from the nucleus. Enhances ACVR1B-induced SMAD-dependent transcription. Binds to single-stranded DNA but not to double-stranded DNA in vitro. Involved in RNA cleavage. This Homo sapiens (Human) protein is Zinc finger CCCH domain-containing protein 3 (ZC3H3).